The sequence spans 200 residues: uncharacterized protein (200 aa).

This is an uncharacterized protein from Amazona oratrix (yellow-headed parrot).